Consider the following 119-residue polypeptide: Large ribosomal subunit protein bL20 (119 aa).

Belongs to the bacterial ribosomal protein bL20 family.

In terms of biological role, binds directly to 23S ribosomal RNA and is necessary for the in vitro assembly process of the 50S ribosomal subunit. It is not involved in the protein synthesizing functions of that subunit. The polypeptide is Large ribosomal subunit protein bL20 (Shewanella amazonensis (strain ATCC BAA-1098 / SB2B)).